We begin with the raw amino-acid sequence, 201 residues long: Transcription factor MYB82 (201 aa).

HTH myb-type domains follow at residues 9–61 and 62–116; these read KSYV…KNYL and RPNI…NKKP. DNA-binding regions (H-T-H motif) lie at residues 37-61 and 89-112; these read WADISRRSGLKRGGKSCRLRWKNYL and WSLIAGRLPGRTDNEVKNYWNTHL. The tract at residues 112–133 is disordered; the sequence is LNKKPNSRRQNAPESIVGATPF.

As to quaternary structure, homodimer and heterodimer with GL1. Part of the WD40-bHLH-MYB complex. Interacts with BHLH012/MYC1 and BHLH042/TT8. Interacts (via N-terminus) with GL1 and GL3. As to expression, mainly expressed in the trichomes of new leaves.

It is found in the nucleus. Its function is as follows. Transcription activation factor positively regulating trichomes development. Has a function nearly equivalent to that of GL1 and can complement gl1 mutants. This chain is Transcription factor MYB82 (MYB82), found in Arabidopsis thaliana (Mouse-ear cress).